The sequence spans 420 residues: Glutamyl-tRNA reductase (420 aa).

Substrate-binding positions include 49-52, serine 109, 114-116, and glutamine 120; these read TCNR and EPQ. The active-site Nucleophile is cysteine 50. Residue 189 to 194 coordinates NADP(+); sequence GAGETI.

The protein belongs to the glutamyl-tRNA reductase family. Homodimer.

The catalysed reaction is (S)-4-amino-5-oxopentanoate + tRNA(Glu) + NADP(+) = L-glutamyl-tRNA(Glu) + NADPH + H(+). It participates in porphyrin-containing compound metabolism; protoporphyrin-IX biosynthesis; 5-aminolevulinate from L-glutamyl-tRNA(Glu): step 1/2. In terms of biological role, catalyzes the NADPH-dependent reduction of glutamyl-tRNA(Glu) to glutamate 1-semialdehyde (GSA). This Serratia proteamaculans (strain 568) protein is Glutamyl-tRNA reductase.